Reading from the N-terminus, the 253-residue chain is Ubiquinone biosynthesis O-methyltransferase (253 aa).

The S-adenosyl-L-methionine site is built by Arg-41, Gly-72, Asp-93, and Met-136.

The protein belongs to the methyltransferase superfamily. UbiG/COQ3 family.

The enzyme catalyses a 3-demethylubiquinol + S-adenosyl-L-methionine = a ubiquinol + S-adenosyl-L-homocysteine + H(+). It carries out the reaction a 3-(all-trans-polyprenyl)benzene-1,2-diol + S-adenosyl-L-methionine = a 2-methoxy-6-(all-trans-polyprenyl)phenol + S-adenosyl-L-homocysteine + H(+). The protein operates within cofactor biosynthesis; ubiquinone biosynthesis. O-methyltransferase that catalyzes the 2 O-methylation steps in the ubiquinone biosynthetic pathway. This chain is Ubiquinone biosynthesis O-methyltransferase, found in Chelativorans sp. (strain BNC1).